A 126-amino-acid polypeptide reads, in one-letter code: Flagellar protein FliT (126 aa).

The interval 1-50 (MVSPHRLLKDYQQLLSLSQKILHLAISGQWDTLVEQEIVYVQSVEGLVNT) is required for homodimerization. Residues 60 to 98 (MRLHLRQILQEVMDNEAKVKQLLQKRMDELSSLMGQSLK) are fliD binding.

The protein belongs to the FliT family. As to quaternary structure, homodimer. Interacts with FliD and FlhC.

It is found in the cytoplasm. The protein resides in the cytosol. Functionally, dual-function protein that regulates the transcription of class 2 flagellar operons and that also acts as an export chaperone for the filament-capping protein FliD. As a transcriptional regulator, acts as an anti-FlhDC factor; it directly binds FlhC, thus inhibiting the binding of the FlhC/FlhD complex to class 2 promoters, resulting in decreased expression of class 2 flagellar operons. As a chaperone, effects FliD transition to the membrane by preventing its premature polymerization, and by directing it to the export apparatus. This is Flagellar protein FliT from Pectobacterium atrosepticum (strain SCRI 1043 / ATCC BAA-672) (Erwinia carotovora subsp. atroseptica).